The chain runs to 108 residues: MAPLRKTYVLKLYVAGNTPNSVRALKTLNNILEKEFKGVYALKVIDVLKNPQLAEEDKILATPTLAKVLPPPVRRIIGDLSNREKVLIGLDLLYEEIGDQAEDDLGLE.

The protein belongs to the KaiB family. As to quaternary structure, undergoes a major conformational rearrangment; in the free state forms homotetramers with 2 dimers. When bound to the CI domain of KaiC, KaiA or CikA switches to a monomeric thioredoxin-fold (KaiB(fs)). The KaiABC complex composition changes during the circadian cycle to control KaiC phosphorylation. Complexes KaiC(6), KaiA(2-4):KaiC(6), KaiB(6):KaiC(6) and KaiC(6):KaiB(6):KaiA(12) are among the most important forms, many form cooperatively. Binds to KaiA; 1 KaiB(fs) binds to the KaiA homodimer. Binds to the B-loop in the CI domain of KaiC; SasA and KaiB compete to bind to the CI domain. Binding to KaiC CI domain occurs 1:1. KaiA and CikA bind to the same region of KaiB(fs) and therefore compete.

Its function is as follows. Key component of the KaiABC oscillator complex, which constitutes the main circadian regulator in cyanobacteria. Its composition changes during the circadian cycle to control KaiC phosphorylation. KaiA stimulates KaiC autophosphorylation, while KaiB sequesters KaiA, leading to KaiC autodephosphorylation. KaiA binding to KaiC yields KaiA(2-4):KaiC(6) complexes which stimulate KaiC autophosphorylation. Phospho-Ser-431 KaiC accumulation triggers binding of KaiB to form the KaiB(6):KaiC(6) complex, leading to changes in the output regulators CikA and SasA. KaiB switches to a thioredoxin-like fold (KaiB(fs)) in complex with KaiC. KaiB(6):KaiC(6) formation exposes a site for KaiA binding that sequesters KaiA from the CII domain, making the KaiC(6):KaiB(6):KaiA(12) complex that results in KaiC autodephosphorylation. Complete dephosphorylation of KaiC leads to dissociation of KaiA(2):KaiB(1), completing 1 cycle of the Kai oscillator. A metamorphic protein which reversibly switches between an inactive tetrameric fold and a rare, thioredoxin-like monomeric fold (KaiB(fs)). KaiB(fs) binds phospho-KaiC, KaiA and CikA. KaiA and CikA compete for binding to KaiB(fs), and KaiB(fs) and SasA compete for binding to KaiC, thus the clock oscillator and output signal pathway are tightly coupled. This chain is Circadian clock oscillator protein KaiB, found in Thermosynechococcus vestitus (strain NIES-2133 / IAM M-273 / BP-1).